The primary structure comprises 729 residues: Fatty acid oxidation complex subunit alpha (729 aa).

The interval 1 to 189 (MLYQSETLQL…KIGLVDAVVD (189 aa)) is enoyl-CoA hydratase/isomerase. Substrate is bound at residue aspartate 296. The tract at residues 311–729 (AAPKLAAVLG…LLDVSTNQPA (419 aa)) is 3-hydroxyacyl-CoA dehydrogenase. Residues methionine 324, aspartate 343, 400-402 (VVE), lysine 407, and serine 429 each bind NAD(+). Histidine 450 serves as the catalytic For 3-hydroxyacyl-CoA dehydrogenase activity. Asparagine 453 is an NAD(+) binding site. 2 residues coordinate substrate: asparagine 500 and tyrosine 660.

The protein in the N-terminal section; belongs to the enoyl-CoA hydratase/isomerase family. In the C-terminal section; belongs to the 3-hydroxyacyl-CoA dehydrogenase family. As to quaternary structure, heterotetramer of two alpha chains (FadB) and two beta chains (FadA).

It catalyses the reaction a (3S)-3-hydroxyacyl-CoA + NAD(+) = a 3-oxoacyl-CoA + NADH + H(+). The enzyme catalyses a (3S)-3-hydroxyacyl-CoA = a (2E)-enoyl-CoA + H2O. It carries out the reaction a 4-saturated-(3S)-3-hydroxyacyl-CoA = a (3E)-enoyl-CoA + H2O. The catalysed reaction is (3S)-3-hydroxybutanoyl-CoA = (3R)-3-hydroxybutanoyl-CoA. It catalyses the reaction a (3Z)-enoyl-CoA = a 4-saturated (2E)-enoyl-CoA. The enzyme catalyses a (3E)-enoyl-CoA = a 4-saturated (2E)-enoyl-CoA. The protein operates within lipid metabolism; fatty acid beta-oxidation. Involved in the aerobic and anaerobic degradation of long-chain fatty acids via beta-oxidation cycle. Catalyzes the formation of 3-oxoacyl-CoA from enoyl-CoA via L-3-hydroxyacyl-CoA. It can also use D-3-hydroxyacyl-CoA and cis-3-enoyl-CoA as substrate. In Yersinia pseudotuberculosis serotype O:1b (strain IP 31758), this protein is Fatty acid oxidation complex subunit alpha.